The chain runs to 538 residues: uncharacterized protein (538 aa).

Positions 1 to 17 (MNLQILLLLLLFCHVAA) are cleaved as a signal peptide. Residue Asn-115 is glycosylated (N-linked (GlcNAc...) asparagine).

This is an uncharacterized protein from Caenorhabditis elegans.